A 231-amino-acid polypeptide reads, in one-letter code: Putative carboxymethylenebutenolidase (231 aa).

Residues D169 and H200 contribute to the active site.

The protein belongs to the dienelactone hydrolase family.

It carries out the reaction 2-(5-oxo-2,5-dihydrofuran-2-ylidene)acetate + H2O = 4-oxohex-2-enedioate + H(+). This is Putative carboxymethylenebutenolidase from Azospirillum brasilense.